The sequence spans 235 residues: Large ribosomal subunit protein uL1 (235 aa).

Belongs to the universal ribosomal protein uL1 family. As to quaternary structure, part of the 50S ribosomal subunit.

In terms of biological role, binds directly to 23S rRNA. The L1 stalk is quite mobile in the ribosome, and is involved in E site tRNA release. Its function is as follows. Protein L1 is also a translational repressor protein, it controls the translation of the L11 operon by binding to its mRNA. This chain is Large ribosomal subunit protein uL1, found in Methylobacterium nodulans (strain LMG 21967 / CNCM I-2342 / ORS 2060).